Here is a 365-residue protein sequence, read N- to C-terminus: Chorismate synthase (365 aa).

R46 lines the NADP(+) pocket. Residues 124-126 (RAS), G284, 299-303 (KPTPS), and R326 each bind FMN.

It belongs to the chorismate synthase family. FMNH2 serves as cofactor.

The enzyme catalyses 5-O-(1-carboxyvinyl)-3-phosphoshikimate = chorismate + phosphate. It participates in metabolic intermediate biosynthesis; chorismate biosynthesis; chorismate from D-erythrose 4-phosphate and phosphoenolpyruvate: step 7/7. Its function is as follows. Catalyzes the anti-1,4-elimination of the C-3 phosphate and the C-6 proR hydrogen from 5-enolpyruvylshikimate-3-phosphate (EPSP) to yield chorismate, which is the branch point compound that serves as the starting substrate for the three terminal pathways of aromatic amino acid biosynthesis. This reaction introduces a second double bond into the aromatic ring system. In Pyrobaculum neutrophilum (strain DSM 2338 / JCM 9278 / NBRC 100436 / V24Sta) (Thermoproteus neutrophilus), this protein is Chorismate synthase.